The primary structure comprises 176 residues: Transcriptional repressor NrdR (176 aa).

A zinc finger lies at 3–34 (CPFCQHTDSRVLESRSAEAGQSVRRRRECLQC). The ATP-cone domain occupies 49 to 139 (ITVIKRNQDR…VYRQFRGIRD (91 aa)). The tract at residues 151-176 (GDGPLPSVLDEPYEDTAQPTIMISPQ) is disordered. Residues 167 to 176 (AQPTIMISPQ) are compositionally biased toward polar residues.

It belongs to the NrdR family. Requires Zn(2+) as cofactor.

In terms of biological role, negatively regulates transcription of bacterial ribonucleotide reductase nrd genes and operons by binding to NrdR-boxes. The sequence is that of Transcriptional repressor NrdR from Acaryochloris marina (strain MBIC 11017).